A 217-amino-acid polypeptide reads, in one-letter code: Somatotropin (217 aa).

The N-terminal stretch at 1–24 (MAAGSWTSLLLAFTLLCLPQLREA) is a signal peptide. His44 provides a ligand contact to Zn(2+). Cys79 and Cys191 are oxidised to a cystine. Ser132 carries the phosphoserine modification. Zn(2+) is bound at residue Glu200. Cysteines 208 and 215 form a disulfide.

It belongs to the somatotropin/prolactin family.

It localises to the secreted. Functionally, plays an important role in growth control. Its major role in stimulating body growth is to stimulate the liver and other tissues to secrete IGF1. It stimulates both the differentiation and proliferation of myoblasts. It also stimulates amino acid uptake and protein synthesis in muscle and other tissues. The chain is Somatotropin (GH1) from Callithrix jacchus (White-tufted-ear marmoset).